The chain runs to 215 residues: Cytochrome b6 (215 aa).

The helical transmembrane segment at 32–52 (IFYCLGGITLTCFLVQVATGF) threads the bilayer. Residue cysteine 35 participates in heme c binding. Heme b is bound by residues histidine 86 and histidine 100. 3 helical membrane passes run 90 to 110 (ASMM…TGGF), 116 to 136 (LTWV…VTGY), and 186 to 206 (LHTF…FLMI). 2 residues coordinate heme b: histidine 187 and histidine 202.

It belongs to the cytochrome b family. PetB subfamily. As to quaternary structure, the 4 large subunits of the cytochrome b6-f complex are cytochrome b6, subunit IV (17 kDa polypeptide, PetD), cytochrome f and the Rieske protein, while the 4 small subunits are PetG, PetL, PetM and PetN. The complex functions as a dimer. It depends on heme b as a cofactor. The cofactor is heme c.

The protein resides in the plastid. It localises to the chloroplast thylakoid membrane. Its function is as follows. Component of the cytochrome b6-f complex, which mediates electron transfer between photosystem II (PSII) and photosystem I (PSI), cyclic electron flow around PSI, and state transitions. This Citrus sinensis (Sweet orange) protein is Cytochrome b6.